Consider the following 718-residue polypeptide: Polyribonucleotide nucleotidyltransferase (718 aa).

The Mg(2+) site is built by aspartate 497 and aspartate 503. One can recognise a KH domain in the interval 564–623 (PRLLTMRIDPDMIGLVIGPGGKTVKSITEQTKTKIDIDDDGTVTISASEAEQAERAKQLI). An S1 motif domain is found at 633-701 (GEVYVGRVTR…NKGRLNLTRL (69 aa)).

It belongs to the polyribonucleotide nucleotidyltransferase family. Mg(2+) serves as cofactor.

The protein resides in the cytoplasm. It carries out the reaction RNA(n+1) + phosphate = RNA(n) + a ribonucleoside 5'-diphosphate. In terms of biological role, involved in mRNA degradation. Catalyzes the phosphorolysis of single-stranded polyribonucleotides processively in the 3'- to 5'-direction. In Gloeothece citriformis (strain PCC 7424) (Cyanothece sp. (strain PCC 7424)), this protein is Polyribonucleotide nucleotidyltransferase.